We begin with the raw amino-acid sequence, 452 residues long: Phosphoglucosamine mutase (452 aa).

Residue S108 is the Phosphoserine intermediate of the active site. 4 residues coordinate Mg(2+): S108, D247, D249, and D251. Phosphoserine is present on S108.

Belongs to the phosphohexose mutase family. Mg(2+) is required as a cofactor. Post-translationally, activated by phosphorylation.

It catalyses the reaction alpha-D-glucosamine 1-phosphate = D-glucosamine 6-phosphate. Catalyzes the conversion of glucosamine-6-phosphate to glucosamine-1-phosphate. This Paraburkholderia phytofirmans (strain DSM 17436 / LMG 22146 / PsJN) (Burkholderia phytofirmans) protein is Phosphoglucosamine mutase.